The chain runs to 282 residues: Pantothenate synthetase (282 aa).

30–37 (MGYLHEGH) contributes to the ATP binding site. His-37 (proton donor) is an active-site residue. Gln-61 contacts (R)-pantoate. Beta-alanine is bound at residue Gln-61. 147-150 (GMKD) lines the ATP pocket. Gln-153 provides a ligand contact to (R)-pantoate. Residues Val-176 and 184–187 (KSSR) each bind ATP.

The protein belongs to the pantothenate synthetase family. In terms of assembly, homodimer.

The protein resides in the cytoplasm. The catalysed reaction is (R)-pantoate + beta-alanine + ATP = (R)-pantothenate + AMP + diphosphate + H(+). The protein operates within cofactor biosynthesis; (R)-pantothenate biosynthesis; (R)-pantothenate from (R)-pantoate and beta-alanine: step 1/1. Catalyzes the condensation of pantoate with beta-alanine in an ATP-dependent reaction via a pantoyl-adenylate intermediate. The protein is Pantothenate synthetase of Bacillus cereus (strain ZK / E33L).